Here is a 162-residue protein sequence, read N- to C-terminus: MGLETEKADVQLCMDDDAYSRHSAVDFGDLEQLADSGSDRDPRRLNSHLQVGFEDVIAEPVSTHSFDKVWICSHALFEVSKYVIYKFLTLLLAMPMAFAAGVLFATLSCLHIWIIMPFVKTCLMVLPSVQTIWKSVTDAVIAPLCSSVGRSFSSVSLQVSHD.

At 1–86 the chain is on the cytoplasmic side; it reads MGLETEKADV…FEVSKYVIYK (86 aa). Tyr-19 is modified (phosphotyrosine; by SRC). Ser-20, Ser-23, and Ser-36 each carry phosphoserine. An intramembrane region (helical) is located at residues 87-107; the sequence is FLTLLLAMPMAFAAGVLFATL. Over 108-162 the chain is Cytoplasmic; the sequence is SCLHIWIIMPFVKTCLMVLPSVQTIWKSVTDAVIAPLCSSVGRSFSSVSLQVSHD.

Belongs to the caveolin family. As to quaternary structure, monomer or homodimer. Interacts with CAV1; the interaction forms a stable heterooligomeric complex that is required for targeting to lipid rafts and for caveolae formation. Tyrosine phosphorylated forms do not form heterooligomers with the Tyr-19-phosphorylated form existing as a monomer or dimer. Interacts (tyrosine phosphorylated form) with the SH2 domain-containing proteins, RASA1, NCK1 and SRC. Interacts (tyrosine phosphorylated form) with INSR. Interacts (Tyr-19 phosphorylated form) with MAPK1 (phosphorylated form); the interaction, promoted by insulin, leads to nuclear location and MAPK1 activation. Interacts with STAT3; the interaction is increased on insulin-induced tyrosine phosphorylation leading to STAT activation. Phosphorylated on serine and tyrosine residues. CAV1 promotes phosphorylation on Ser-23 which then targets the complex to the plasma membrane, lipid rafts and caveolae. Phosphorylation on Ser-36 appears to modulate mitosis in endothelial cells. Phosphorylation on Tyr-19 is required for insulin-induced phosphorylation of MAPK1 and DNA binding of STAT3. Tyrosine phosphorylation is induced by both EGF and insulin.

It is found in the nucleus. The protein localises to the cytoplasm. The protein resides in the golgi apparatus membrane. It localises to the cell membrane. Its subcellular location is the membrane. It is found in the caveola. May act as a scaffolding protein within caveolar membranes. Interacts directly with G-protein alpha subunits and can functionally regulate their activity. Acts as an accessory protein in conjunction with CAV1 in targeting to lipid rafts and driving caveolae formation. The Ser-36 phosphorylated form has a role in modulating mitosis in endothelial cells. Positive regulator of cellular mitogenesis of the MAPK signaling pathway. Required for the insulin-stimulated nuclear translocation and activation of MAPK1 and STAT3, and the subsequent regulation of cell cycle progression. The sequence is that of Caveolin-2 (CAV2) from Canis lupus familiaris (Dog).